Reading from the N-terminus, the 870-residue chain is DNA mismatch repair protein MutS (870 aa).

622-629 (GPNMGGKS) lines the ATP pocket.

This sequence belongs to the DNA mismatch repair MutS family.

This protein is involved in the repair of mismatches in DNA. It is possible that it carries out the mismatch recognition step. This protein has a weak ATPase activity. The sequence is that of DNA mismatch repair protein MutS from Methylibium petroleiphilum (strain ATCC BAA-1232 / LMG 22953 / PM1).